The sequence spans 723 residues: Tripartite motif-containing protein 42 (723 aa).

The segment at 146 to 192 adopts an RING-type zinc-finger fold; it reads CPMCSRLRLHSFMLPCNHSLCEKCLRQLQKHAEVTENFFILICPVCD. B box-type zinc fingers lie at residues 235–280 and 285–326; these read PILC…FVDT and QDEK…TISL. Residues cysteine 290, histidine 293, cysteine 313, and histidine 318 each coordinate Zn(2+). Residues 382–407 are a coiled coil; the sequence is KLRSILQEKEKIIMEQIENLEVSRQK. Positions 434–492 constitute a COS domain; sequence LKETGQVAFLQSAKILVDQIEDGIQTTYRPDPQLRLHSINYVPLDFVELSSAIHELFPT. One can recognise a Fibronectin type-III domain in the interval 603-701; it reads TPGPIVIYQT…DICKVVTPDG (99 aa).

Belongs to the TRIM/RBCC family.

This chain is Tripartite motif-containing protein 42 (TRIM42), found in Homo sapiens (Human).